The sequence spans 150 residues: Large ribosomal subunit protein bL9 (150 aa).

Belongs to the bacterial ribosomal protein bL9 family.

In terms of biological role, binds to the 23S rRNA. This is Large ribosomal subunit protein bL9 from Shewanella piezotolerans (strain WP3 / JCM 13877).